Consider the following 465-residue polypeptide: ATP synthase subunit beta (465 aa).

Position 148–155 (148–155 (GGAGVGKT)) interacts with ATP.

It belongs to the ATPase alpha/beta chains family. F-type ATPases have 2 components, CF(1) - the catalytic core - and CF(0) - the membrane proton channel. CF(1) has five subunits: alpha(3), beta(3), gamma(1), delta(1), epsilon(1). CF(0) has three main subunits: a(1), b(2) and c(9-12). The alpha and beta chains form an alternating ring which encloses part of the gamma chain. CF(1) is attached to CF(0) by a central stalk formed by the gamma and epsilon chains, while a peripheral stalk is formed by the delta and b chains.

It is found in the cell inner membrane. The enzyme catalyses ATP + H2O + 4 H(+)(in) = ADP + phosphate + 5 H(+)(out). In terms of biological role, produces ATP from ADP in the presence of a proton gradient across the membrane. The catalytic sites are hosted primarily by the beta subunits. This chain is ATP synthase subunit beta, found in Neisseria meningitidis serogroup C (strain 053442).